Consider the following 119-residue polypeptide: Large ribosomal subunit protein uL18 (119 aa).

Belongs to the universal ribosomal protein uL18 family. As to quaternary structure, part of the 50S ribosomal subunit; part of the 5S rRNA/L5/L18/L25 subcomplex. Contacts the 5S and 23S rRNAs.

In terms of biological role, this is one of the proteins that bind and probably mediate the attachment of the 5S RNA into the large ribosomal subunit, where it forms part of the central protuberance. The protein is Large ribosomal subunit protein uL18 of Ruegeria sp. (strain TM1040) (Silicibacter sp.).